Here is a 95-residue protein sequence, read N- to C-terminus: NADH-quinone oxidoreductase subunit 11 (95 aa).

A run of 3 helical transmembrane segments spans residues 1–21 (MSYL…VLTR), 25–45 (ILVF…LVGF), and 59–79 (MVIA…VAIF).

This sequence belongs to the complex I subunit 4L family. In terms of assembly, NDH-1 is composed of 15 different subunits, Nqo1 to Nqo15. The complex has a L-shaped structure, with the hydrophobic arm (subunits Nqo7, Nqo8 and Nqo10 to Nqo14) embedded in the membrane and the hydrophilic peripheral arm (subunits Nqo1 to Nqo6, Nqo9 and Nqo15) protruding into the bacterial cytoplasm. The hydrophilic domain contains all the redox centers.

The protein localises to the cell inner membrane. The enzyme catalyses a quinone + NADH + 5 H(+)(in) = a quinol + NAD(+) + 4 H(+)(out). In terms of biological role, NDH-1 shuttles electrons from NADH, via FMN and iron-sulfur (Fe-S) centers, to quinones in the respiratory chain. The immediate electron acceptor for the enzyme in this species is menaquinone. Couples the redox reaction to proton translocation (for every two electrons transferred, four hydrogen ions are translocated across the cytoplasmic membrane), and thus conserves the redox energy in a proton gradient required for the synthesis of ATP. This Thermus thermophilus (strain ATCC 27634 / DSM 579 / HB8) protein is NADH-quinone oxidoreductase subunit 11 (nqo11).